The chain runs to 871 residues: DNA mismatch repair protein MutS (871 aa).

Residue 625-632 (GPNMAGKS) participates in ATP binding.

It belongs to the DNA mismatch repair MutS family.

Its function is as follows. This protein is involved in the repair of mismatches in DNA. It is possible that it carries out the mismatch recognition step. This protein has a weak ATPase activity. In Chlorobium limicola (strain DSM 245 / NBRC 103803 / 6330), this protein is DNA mismatch repair protein MutS.